Consider the following 413-residue polypeptide: Serine protease inhibitor A3L (413 aa).

The first 28 residues, 1-28 (MAFIAALGLLMAGICPAVLCDGTLGRDT), serve as a signal peptide directing secretion. A Phosphoserine modification is found at serine 30. N-linked (GlcNAc...) asparagine glycans are attached at residues asparagine 102, asparagine 182, asparagine 220, and asparagine 267. The tract at residues 365–389 (GTEATAATGVATVIRRQPRTLNFNR) is RCL.

The protein belongs to the serpin family. N-glycosylated. In terms of tissue distribution, liver.

It localises to the secreted. The chain is Serine protease inhibitor A3L (Serpina3l) from Rattus norvegicus (Rat).